A 338-amino-acid polypeptide reads, in one-letter code: Phenylalanine--tRNA ligase alpha subunit (338 aa).

Mg(2+) is bound at residue glutamate 252.

This sequence belongs to the class-II aminoacyl-tRNA synthetase family. Phe-tRNA synthetase alpha subunit type 1 subfamily. As to quaternary structure, tetramer of two alpha and two beta subunits. Requires Mg(2+) as cofactor.

It localises to the cytoplasm. The enzyme catalyses tRNA(Phe) + L-phenylalanine + ATP = L-phenylalanyl-tRNA(Phe) + AMP + diphosphate + H(+). The protein is Phenylalanine--tRNA ligase alpha subunit of Fusobacterium nucleatum subsp. nucleatum (strain ATCC 25586 / DSM 15643 / BCRC 10681 / CIP 101130 / JCM 8532 / KCTC 2640 / LMG 13131 / VPI 4355).